Reading from the N-terminus, the 474-residue chain is ATP synthase subunit beta 2 (474 aa).

153–160 (GGAGVGKT) lines the ATP pocket.

It belongs to the ATPase alpha/beta chains family. In terms of assembly, F-type ATPases have 2 components, CF(1) - the catalytic core - and CF(0) - the membrane proton channel. CF(1) has five subunits: alpha(3), beta(3), gamma(1), delta(1), epsilon(1). CF(0) has three main subunits: a(1), b(2) and c(9-12). The alpha and beta chains form an alternating ring which encloses part of the gamma chain. CF(1) is attached to CF(0) by a central stalk formed by the gamma and epsilon chains, while a peripheral stalk is formed by the delta and b chains.

The protein localises to the cell inner membrane. The enzyme catalyses ATP + H2O + 4 H(+)(in) = ADP + phosphate + 5 H(+)(out). Its function is as follows. Produces ATP from ADP in the presence of a proton gradient across the membrane. The catalytic sites are hosted primarily by the beta subunits. This chain is ATP synthase subunit beta 2, found in Syntrophotalea carbinolica (strain DSM 2380 / NBRC 103641 / GraBd1) (Pelobacter carbinolicus).